The following is a 474-amino-acid chain: Glycogen synthase (474 aa).

Residue Lys-12 participates in ADP-alpha-D-glucose binding.

This sequence belongs to the glycosyltransferase 1 family. Bacterial/plant glycogen synthase subfamily.

The enzyme catalyses [(1-&gt;4)-alpha-D-glucosyl](n) + ADP-alpha-D-glucose = [(1-&gt;4)-alpha-D-glucosyl](n+1) + ADP + H(+). The protein operates within glycan biosynthesis; glycogen biosynthesis. Functionally, synthesizes alpha-1,4-glucan chains using ADP-glucose. This Xanthomonas axonopodis pv. citri (strain 306) protein is Glycogen synthase.